Consider the following 989-residue polypeptide: DNA-directed RNA polymerase subunit beta' (989 aa).

Residues aspartate 383, aspartate 385, and aspartate 387 each contribute to the Mg(2+) site.

Belongs to the RNA polymerase beta' chain family. The RNAP catalytic core consists of 2 alpha, 1 beta, 1 beta' and 1 omega subunit. When a sigma factor is associated with the core the holoenzyme is formed, which can initiate transcription. Mg(2+) is required as a cofactor.

The enzyme catalyses RNA(n) + a ribonucleoside 5'-triphosphate = RNA(n+1) + diphosphate. Its function is as follows. DNA-dependent RNA polymerase catalyzes the transcription of DNA into RNA using the four ribonucleoside triphosphates as substrates. The polypeptide is DNA-directed RNA polymerase subunit beta' (rpoC) (Leuconostoc pseudomesenteroides).